A 336-amino-acid polypeptide reads, in one-letter code: GTPase Obg (336 aa).

In terms of domain architecture, Obg spans 1 to 159 (MKFLDQAKIY…RWVWLRLKLI (159 aa)). The OBG-type G domain maps to 160 to 328 (ADIGLVGLPN…LLRLLQDRVT (169 aa)). Residues 166–173 (GLPNAGKS), 191–195 (FTTLH), 213–216 (DIPG), 280–283 (NKCD), and 309–311 (SGA) each bind GTP. Mg(2+) contacts are provided by Ser173 and Thr193.

This sequence belongs to the TRAFAC class OBG-HflX-like GTPase superfamily. OBG GTPase family. Monomer. Mg(2+) is required as a cofactor.

It localises to the cytoplasm. Functionally, an essential GTPase which binds GTP, GDP and possibly (p)ppGpp with moderate affinity, with high nucleotide exchange rates and a fairly low GTP hydrolysis rate. Plays a role in control of the cell cycle, stress response, ribosome biogenesis and in those bacteria that undergo differentiation, in morphogenesis control. The sequence is that of GTPase Obg from Gluconobacter oxydans (strain 621H) (Gluconobacter suboxydans).